Here is a 117-residue protein sequence, read N- to C-terminus: Large ribosomal subunit protein bL20 (117 aa).

It belongs to the bacterial ribosomal protein bL20 family.

Binds directly to 23S ribosomal RNA and is necessary for the in vitro assembly process of the 50S ribosomal subunit. It is not involved in the protein synthesizing functions of that subunit. In Rickettsia peacockii (strain Rustic), this protein is Large ribosomal subunit protein bL20.